Consider the following 963-residue polypeptide: Non-ribosomal peptide synthetase CmlP (963 aa).

The 77-residue stretch at 492-568 (GEDAAELRRV…AAFLRHLRGE (77 aa)) folds into the Carrier domain. Ser526 carries the O-(pantetheine 4'-phosphoryl)serine modification. A disordered region spans residues 928-963 (GRLLGTPPDTPAGDRPERTGTTAEAQNGAAHAPTPR).

This sequence belongs to the ATP-dependent AMP-binding enzyme family. It depends on pantetheine 4'-phosphate as a cofactor.

The enzyme catalyses 4-amino-L-phenylalanine + holo-[peptidyl-carrier protein] + ATP = 4-amino-L-phenylalanyl-[peptidyl-carrier protein] + AMP + diphosphate. Its pathway is antibiotic biosynthesis. Its function is as follows. Involved in chloramphenicol biosynthesis. Activates 4-amino-L-phenylalanine by adenylation and loads it onto its peptidyl carrier domain, via a thioester linkage to the phosphopanthetheine moiety. Can also adenylate tyrosine and phenylalanine at low rates, but not L-p-nitrophenylalanine or threo-phenylserine. This Streptomyces venezuelae (strain ATCC 10712 / CBS 650.69 / DSM 40230 / JCM 4526 / NBRC 13096 / PD 04745) protein is Non-ribosomal peptide synthetase CmlP.